Reading from the N-terminus, the 119-residue chain is Flagellar transcriptional regulator FlhD (119 aa).

Belongs to the FlhD family. In terms of assembly, homodimer; disulfide-linked. Forms a heterohexamer composed of two FlhC and four FlhD subunits. Each FlhC binds a FlhD dimer, forming a heterotrimer, and a hexamer assembles by dimerization of two heterotrimers.

It localises to the cytoplasm. Functions in complex with FlhC as a master transcriptional regulator that regulates transcription of several flagellar and non-flagellar operons by binding to their promoter region. Activates expression of class 2 flagellar genes, including fliA, which is a flagellum-specific sigma factor that turns on the class 3 genes. Also regulates genes whose products function in a variety of physiological pathways. The chain is Flagellar transcriptional regulator FlhD from Enterobacter sp. (strain 638).